The following is a 274-amino-acid chain: MSLQAIIEAAFERRAEITPKTVDAETRAAIEEVIEGLDSGKYRVAEKIDGEWVTHQWLKKAVLLSFRINDNQIIDGAETKYYDKVALKFADYTEERFAQEGFRVVPSATVRKGAYISKNCVLMPSYVNIGAYVGEGTMVDTWATVGSCAQIGKNVHLSGGVGIGGVLEPLQANPTIIGDNCFIGARSEVVEGVIVEDGCVISMGVFIGQSTRIYDRETGEIHYGRVPAGSVVVSGSLPSKCGKYSLYCAVIVKKVDAKTLGKVGINELLRTIEE.

Positions 103 and 140 each coordinate substrate.

This sequence belongs to the transferase hexapeptide repeat family. Homotrimer.

It is found in the cytoplasm. It carries out the reaction (S)-2,3,4,5-tetrahydrodipicolinate + succinyl-CoA + H2O = (S)-2-succinylamino-6-oxoheptanedioate + CoA. It participates in amino-acid biosynthesis; L-lysine biosynthesis via DAP pathway; LL-2,6-diaminopimelate from (S)-tetrahydrodipicolinate (succinylase route): step 1/3. This chain is 2,3,4,5-tetrahydropyridine-2,6-dicarboxylate N-succinyltransferase, found in Actinobacillus pleuropneumoniae serotype 5b (strain L20).